The sequence spans 183 residues: uncharacterized protein (183 aa).

Belongs to the isochorismatase family.

This is an uncharacterized protein from Bacillus subtilis (strain 168).